Reading from the N-terminus, the 193-residue chain is Fe/S biogenesis protein NfuA (193 aa).

[4Fe-4S] cluster is bound by residues cysteine 151 and cysteine 154.

This sequence belongs to the NfuA family. As to quaternary structure, homodimer. [4Fe-4S] cluster serves as cofactor.

In terms of biological role, involved in iron-sulfur cluster biogenesis. Binds a 4Fe-4S cluster, can transfer this cluster to apoproteins, and thereby intervenes in the maturation of Fe/S proteins. Could also act as a scaffold/chaperone for damaged Fe/S proteins. The polypeptide is Fe/S biogenesis protein NfuA (Buchnera aphidicola subsp. Cinara cedri (strain Cc)).